The sequence spans 309 residues: Protein MAK16 homolog (309 aa).

Residues 194–309 (EADQFSEEEA…IEEETENQAN (116 aa)) are disordered. Composition is skewed to acidic residues over residues 195 to 227 (ADQF…DIED) and 235 to 270 (VEGD…DDEE). Residues 275–293 (ITKKRGPTFKPTKKTPQKR) are compositionally biased toward basic residues. A compositionally biased stretch (acidic residues) spans 299-309 (EIEEETENQAN).

Belongs to the MAK16 family.

The protein resides in the nucleus. It localises to the nucleolus. The sequence is that of Protein MAK16 homolog (mak16l) from Dictyostelium discoideum (Social amoeba).